Consider the following 181-residue polypeptide: Ferredoxin C 2, chloroplastic (181 aa).

Residues 1–44 (MALILPCTFCTSLQKKNFPINRRYITNFRRGATTATCEFRIPVE) constitute a chloroplast transit peptide. Residues 59–151 (HKVTVHDRQR…DLEVETQDED (93 aa)) form the 2Fe-2S ferredoxin-type domain. [2Fe-2S] cluster contacts are provided by C97, C102, C105, and C135.

Belongs to the 2Fe2S plant-type ferredoxin family. It depends on [2Fe-2S] cluster as a cofactor.

It localises to the plastid. The protein localises to the chloroplast. Functionally, ferredoxins are iron-sulfur proteins that transfer electrons in a wide variety of metabolic reactions. Mediates alternative electron partitioning in conditions of acceptor limitation at photosystem I. The protein is Ferredoxin C 2, chloroplastic of Arabidopsis thaliana (Mouse-ear cress).